Here is a 730-residue protein sequence, read N- to C-terminus: Translation factor GUF1 homolog, mitochondrial (730 aa).

The tr-type G domain maps to 106–289 (ELIRNFCIIA…AVVVSIPPPK (184 aa)). Residues 115-122 (AHVDHGKS), 182-186 (DTPGH), and 236-239 (NKID) contribute to the GTP site.

This sequence belongs to the TRAFAC class translation factor GTPase superfamily. Classic translation factor GTPase family. LepA subfamily.

The protein resides in the mitochondrion inner membrane. The catalysed reaction is GTP + H2O = GDP + phosphate + H(+). Its function is as follows. Promotes mitochondrial protein synthesis. May act as a fidelity factor of the translation reaction, by catalyzing a one-codon backward translocation of tRNAs on improperly translocated ribosomes. Binds to mitochondrial ribosomes in a GTP-dependent manner. This chain is Translation factor GUF1 homolog, mitochondrial, found in Theileria annulata.